Consider the following 273-residue polypeptide: Beta-lactamase OXA-23 (273 aa).

A signal peptide spans 1-17 (MNKYFTCYVVASLFLSG). The active-site Acyl-ester intermediate is the S79. Residues S79, K82, S126, T217, W219, and R259 each contribute to the a beta-lactam site. Position 82 is an N6-carboxylysine (K82).

It belongs to the class-D beta-lactamase family. As to quaternary structure, monomer. Carboxylated on the epsilon-amino group of a lysine, with the resulting carbamate functional group serving as a general base. Probably N-carboxylated at Lys-82 at neutral pH in vivo and undergoes complete N-decarboxylation, at pH 4.1, in vitro.

It localises to the periplasm. It catalyses the reaction a beta-lactam + H2O = a substituted beta-amino acid. Inhibited by the desmethyl carbapenem, MA-1-206, via a covalent binding to Ser-79. In terms of biological role, class D beta-lactamase which confers resistance to the beta-lactam antibiotics, including ampicillin, and carbapenems such as imipenem and meropenem. Acts via hydrolysis of the beta-lactam ring. Has penicillin-, cephalosporin- and carbapenem-hydrolyzing activities, but lacks ceftazidime-hydrolyzing activity. This is Beta-lactamase OXA-23 from Acinetobacter baumannii.